The primary structure comprises 429 residues: MSSVSSQPQFRYTQPPSKVLHLRNLPWECTEEELIELGKPFGTVVNTKCNVGANRNQAFIEFEDLNQAIQMISYYASSSEPAQVRGKTVYLQYSNRQEIVNNKTTADVVGNVLLVTIEGDDARMVSIDVLHLVFSAFGFVHKITTFEKTAGYQALVQFTDAETATAAKLALDGRSIPRYLLAETVGQCSLKITYSAHTDLTVKFQSHRSRDYTNPYLPVAPSAIDSTGQVAVGVDGKKMEPESNVLLASIENMQYAVTLDVLHMVFAAFGEVQKIAMFDKNGGVQALIQYSDVQTAVVAKEALEGHCIYDGGFCKLHITYSRHTDLSIKVNNDRSRDYTMPNPPVPMPQQPVQNPYAGNPQQYHAAGGSHHQQQQQPQGGWVQPGGQGSMGMGGGGHNHYMAPPSSSSMHQGPGGHMPPQHYGGPGPMH.

Ser-2 carries the post-translational modification N-acetylserine. RRM domains are found at residues 18-96 (KVLH…YSNR), 110-197 (GNVL…YSAH), and 243-323 (SNVL…YSRH). Residues 331–429 (NNDRSRDYTM…QHYGGPGPMH (99 aa)) form a disordered region. Over residues 367-381 (GGSHHQQQQQPQGGW) the composition is skewed to low complexity. Residues 382–397 (VQPGGQGSMGMGGGGH) show a composition bias toward gly residues.

The protein resides in the nucleus. Its function is as follows. Plays a role in pre-mRNA splicing. Binds to the polypyrimidine tract of introns. May promote the binding of U2 snRNP to pre-mRNA. This Arabidopsis thaliana (Mouse-ear cress) protein is Polypyrimidine tract-binding protein homolog 2.